A 493-amino-acid polypeptide reads, in one-letter code: Ketol-acid reductoisomerase (NADP(+)) (493 aa).

The 192-residue stretch at 17 to 208 folds into the KARI N-terminal Rossmann domain; sequence LSQCRFMDRS…GGDRAGVLHS (192 aa). Residues 45–48, Arg-68, Arg-76, Ser-78, and 108–110 each bind NADP(+); these read CGAQ and DKQ. His-132 is a catalytic residue. Gly-158 provides a ligand contact to NADP(+). KARI C-terminal knotted domains are found at residues 209 to 344 and 345 to 486; these read SFIA…NAPS and SNEH…MKDM. The Mg(2+) site is built by Asp-217, Glu-221, Glu-389, and Glu-393. Ser-414 lines the substrate pocket.

The protein belongs to the ketol-acid reductoisomerase family. Mg(2+) serves as cofactor.

The catalysed reaction is (2R)-2,3-dihydroxy-3-methylbutanoate + NADP(+) = (2S)-2-acetolactate + NADPH + H(+). It carries out the reaction (2R,3R)-2,3-dihydroxy-3-methylpentanoate + NADP(+) = (S)-2-ethyl-2-hydroxy-3-oxobutanoate + NADPH + H(+). It participates in amino-acid biosynthesis; L-isoleucine biosynthesis; L-isoleucine from 2-oxobutanoate: step 2/4. It functions in the pathway amino-acid biosynthesis; L-valine biosynthesis; L-valine from pyruvate: step 2/4. Its function is as follows. Involved in the biosynthesis of branched-chain amino acids (BCAA). Catalyzes an alkyl-migration followed by a ketol-acid reduction of (S)-2-acetolactate (S2AL) to yield (R)-2,3-dihydroxy-isovalerate. In the isomerase reaction, S2AL is rearranged via a Mg-dependent methyl migration to produce 3-hydroxy-3-methyl-2-ketobutyrate (HMKB). In the reductase reaction, this 2-ketoacid undergoes a metal-dependent reduction by NADPH to yield (R)-2,3-dihydroxy-isovalerate. The polypeptide is Ketol-acid reductoisomerase (NADP(+)) (Shewanella amazonensis (strain ATCC BAA-1098 / SB2B)).